Consider the following 545-residue polypeptide: Chaperonin GroEL (545 aa).

ATP is bound by residues 29 to 32, Lys50, 86 to 90, Gly415, and Asp495; these read TLGP and DGTTT.

The protein belongs to the chaperonin (HSP60) family. In terms of assembly, forms a cylinder of 14 subunits composed of two heptameric rings stacked back-to-back. Interacts with the co-chaperonin GroES.

It localises to the cytoplasm. The enzyme catalyses ATP + H2O + a folded polypeptide = ADP + phosphate + an unfolded polypeptide.. Together with its co-chaperonin GroES, plays an essential role in assisting protein folding. The GroEL-GroES system forms a nano-cage that allows encapsulation of the non-native substrate proteins and provides a physical environment optimized to promote and accelerate protein folding. The sequence is that of Chaperonin GroEL from Porphyromonas gingivalis (strain ATCC BAA-308 / W83).